Consider the following 350-residue polypeptide: Purine-rich element-binding protein gamma (350 aa).

2 disordered regions span residues 1 to 59 (MERA…GTSE) and 136 to 172 (GHRQEHGQSKEQVSRRRQKHSAPSPPVSVGSEEHPHS). Gly residues predominate over residues 9 to 27 (GGGSGGGRGRGGKNVGGPG). Positions 47–59 (ASATPNQSGGTSE) are enriched in polar residues. The DNA-binding element occupies 54–296 (SGGTSEIQEL…GIFLKVSEVR (243 aa)). Residues 137-149 (HRQEHGQSKEQVS) are compositionally biased toward basic and acidic residues. Phosphoserine occurs at positions 163, 166, and 342.

It belongs to the PUR DNA-binding protein family. In terms of tissue distribution, isoform 1 is expressed in testis. Isoform 2 is expressed in blastocyst and kidney.

It localises to the nucleus. This chain is Purine-rich element-binding protein gamma (Purg), found in Mus musculus (Mouse).